Consider the following 571-residue polypeptide: MAYSVVRLRKVSALGISRVLQADKGSLWRFHFEPEFGDLLRLGVLTRNYRKNSGSPKFDFTGTGTTSKFDFTDLTCPHTWYPIARKKKRKVILHVGPTNSGKTYSALKHLEQSSSGVYCGPLRLLAWEVAKRLNKANVPCDLITGQEKDLVEGATHKAVTVEMADVTSVYDCAIIDEIQMVGCKQRGFAFTRALLGIAADELHLCGDPAVVPLVEDILKVTGDDVEVHTYERLSPLVPLKVPVSSVSSIKTGDCLVTFSRKDIYAYKKTIERAGKHLCSVVYGSLPPETRTAQATRFNDETNDFDVLVASDAIGMGLNLNISRIIFSTLQKYDGSETRDLTVSEIKQIAGRAGRFQSKFPIGEVTCLHKEDLPLLHSSLKSPSPILERAGLFPTFDLLSGYSQAHPTHGLYQILEHFVENAKLSSNYFISNVEDMMKVAAIVDELPLGLQEKYLFVVSPVDVNDEISGQGLAQFAQNFSKAGIVRLREILAPDRVKVPKTPTELKELESIHKVLDLYVWLSLRLEDSFPDREVAASQKSICNLLIEQFLEGNRLNSPARFSRYLRRQKLSE.

A mitochondrion-targeting transit peptide spans 1–56; that stretch reads MAYSVVRLRKVSALGISRVLQADKGSLWRFHFEPEFGDLLRLGVLTRNYRKNSGSP. The 130-residue stretch at 83-212 folds into the Helicase ATP-binding domain; it reads IARKKKRKVI…HLCGDPAVVP (130 aa). 96 to 103 serves as a coordination point for ATP; the sequence is GPTNSGKT. The short motif at 176-179 is the DEIH box; degenerate element; sequence DEIQ. The Helicase C-terminal domain occupies 213–399; it reads LVEDILKVTG…GLFPTFDLLS (187 aa).

Belongs to the DExH box helicase family. Homodimer; in free form. Component of the mitochondrial degradosome (mtEXO) complex which is a heteropentamer containing 2 copies of SUPV3L1 and 3 copies of PNPT1. Mg(2+) serves as cofactor. It depends on Mn(2+) as a cofactor. As to expression, weakly expressed.

It localises to the nucleus. The protein resides in the mitochondrion matrix. The protein localises to the mitochondrion nucleoid. It catalyses the reaction ATP + H2O = ADP + phosphate + H(+). Activated by the presence of mitochondrial RNA. Major helicase player in mitochondrial RNA metabolism. Component of the mitochondrial degradosome (mtEXO) complex, that degrades 3' overhang double-stranded RNA with a 3'-to-5' directionality in an ATP-dependent manner. ATPase and ATP-dependent multisubstrate helicase, able to unwind double-stranded (ds) DNA and RNA, and RNA/DNA heteroduplexes in the 5'-to-3' direction. Plays a role in the RNA surveillance system in mitochondria; regulates the stability of mature mRNAs, the removal of aberrantly formed mRNAs and the rapid degradation of non coding processing intermediates. Required during pollen development. This is DExH-box ATP-dependent RNA helicase DExH16, mitochondrial from Arabidopsis thaliana (Mouse-ear cress).